A 412-amino-acid polypeptide reads, in one-letter code: ORC1-type DNA replication protein 2 (412 aa).

ATP is bound by residues 61–65 (VGKTA), tyrosine 207, and arginine 219.

This sequence belongs to the CDC6/cdc18 family.

Functionally, involved in regulation of DNA replication. The polypeptide is ORC1-type DNA replication protein 2 (cdc6b) (Haloarcula marismortui (strain ATCC 43049 / DSM 3752 / JCM 8966 / VKM B-1809) (Halobacterium marismortui)).